The sequence spans 30 residues: Cycloviolacin-O20 (30 aa).

Positions 1 to 30 (GIPCGESCVWIPCLTSAIGCSCKSKVCYRD) form a cross-link, cyclopeptide (Gly-Asp). 3 cysteine pairs are disulfide-bonded: Cys-4–Cys-20, Cys-8–Cys-22, and Cys-13–Cys-27.

This is a cyclic peptide.

Probably participates in a plant defense mechanism. This Viola odorata (Sweet violet) protein is Cycloviolacin-O20.